Consider the following 173-residue polypeptide: MSIILGIDPGSRITGYGVIRIVAGKAEYLGSGCIRTDLGELPSRLKQVYDGVSEIITQFKPDEFAIERVFMARNADSALKLGQARGSAIVAAVNALLPVSEYSATQIKQAVVGTGGAAKEQVQHMVTHLLKLSATPQADAADALGVALCHFHTRQILIKMAGRSTGSVRGRYR.

Catalysis depends on residues D8, E67, and D139. Positions 8, 67, and 139 each coordinate Mg(2+).

Belongs to the RuvC family. Homodimer which binds Holliday junction (HJ) DNA. The HJ becomes 2-fold symmetrical on binding to RuvC with unstacked arms; it has a different conformation from HJ DNA in complex with RuvA. In the full resolvosome a probable DNA-RuvA(4)-RuvB(12)-RuvC(2) complex forms which resolves the HJ. Mg(2+) serves as cofactor.

It is found in the cytoplasm. The catalysed reaction is Endonucleolytic cleavage at a junction such as a reciprocal single-stranded crossover between two homologous DNA duplexes (Holliday junction).. The RuvA-RuvB-RuvC complex processes Holliday junction (HJ) DNA during genetic recombination and DNA repair. Endonuclease that resolves HJ intermediates. Cleaves cruciform DNA by making single-stranded nicks across the HJ at symmetrical positions within the homologous arms, yielding a 5'-phosphate and a 3'-hydroxyl group; requires a central core of homology in the junction. The consensus cleavage sequence is 5'-(A/T)TT(C/G)-3'. Cleavage occurs on the 3'-side of the TT dinucleotide at the point of strand exchange. HJ branch migration catalyzed by RuvA-RuvB allows RuvC to scan DNA until it finds its consensus sequence, where it cleaves and resolves the cruciform DNA. This Aeromonas hydrophila subsp. hydrophila (strain ATCC 7966 / DSM 30187 / BCRC 13018 / CCUG 14551 / JCM 1027 / KCTC 2358 / NCIMB 9240 / NCTC 8049) protein is Crossover junction endodeoxyribonuclease RuvC.